Here is a 449-residue protein sequence, read N- to C-terminus: MIWNSKTLSIALGIEISNSVNCNEVQFNSKDVKKGDLFIALQGNRDGHDYIQDAIDKGATAVIVSKQVEINDKDKIILVNNSFEALQKMALYKRENSKAKFIAITGSVGKTSTKEALKILLQHDFIVFASRGNFNNYLGLLINLASMADDTEYAIFELGMNHQGEISELVQILKPNIAMINNISEAHLEFFHSLEEIAEAKCEIFKNFSKNDIAIINASNNCYNKILSILKNLSITNIYSFGHSSKASAKLILYKTLGEQVHLQYYINNKFIDITIPFIPRHFANNYTGVLLIIDILGKDIEISAKYLADIALTKGRGKIINIQNSRVICDYYNASPQSMKAALEYLKQVPADNKTSIIGEMLELGWNSQRLHEELVPYILDAGCTKVYLVGAYTKYIYDLLPNKISKKFFKNVEELITHITDLFEYSELILIKGSRGVKLDKIVDYYQ.

106–112 serves as a coordination point for ATP; the sequence is GSVGKTS.

It belongs to the MurCDEF family. MurF subfamily.

Its subcellular location is the cytoplasm. The enzyme catalyses D-alanyl-D-alanine + UDP-N-acetyl-alpha-D-muramoyl-L-alanyl-gamma-D-glutamyl-meso-2,6-diaminopimelate + ATP = UDP-N-acetyl-alpha-D-muramoyl-L-alanyl-gamma-D-glutamyl-meso-2,6-diaminopimeloyl-D-alanyl-D-alanine + ADP + phosphate + H(+). The protein operates within cell wall biogenesis; peptidoglycan biosynthesis. Involved in cell wall formation. Catalyzes the final step in the synthesis of UDP-N-acetylmuramoyl-pentapeptide, the precursor of murein. The chain is UDP-N-acetylmuramoyl-tripeptide--D-alanyl-D-alanine ligase from Rickettsia prowazekii (strain Madrid E).